The sequence spans 303 residues: Putative F-box protein At5g62060 (303 aa).

The F-box domain occupies Lys27–Ile74.

The protein is Putative F-box protein At5g62060 of Arabidopsis thaliana (Mouse-ear cress).